The sequence spans 133 residues: Cytidine deaminase (133 aa).

The region spanning 4-126 (VDWNMLRGNA…DLLPDAFGLD (123 aa)) is the CMP/dCMP-type deaminase domain. 45-47 (NVE) serves as a coordination point for substrate. Residue C56 coordinates Zn(2+). The active-site Proton donor is E58. Residues C89 and C92 each contribute to the Zn(2+) site.

It belongs to the cytidine and deoxycytidylate deaminase family. As to quaternary structure, homotetramer. Zn(2+) is required as a cofactor.

It carries out the reaction cytidine + H2O + H(+) = uridine + NH4(+). The enzyme catalyses 2'-deoxycytidine + H2O + H(+) = 2'-deoxyuridine + NH4(+). Recycles cytidine and 2-deoxycytidine for uridine and 2-deoxyuridine synthesis, respectively. Catalyzes the hydrolytic deamination of cytidine and 2-deoxycytidine to form, respectively, uridine and 2-deoxyuridine. This Mycobacterium tuberculosis (strain CDC 1551 / Oshkosh) protein is Cytidine deaminase (cdd).